A 491-amino-acid chain; its full sequence is Chromosomal replication initiator protein DnaA (491 aa).

A domain I, interacts with DnaA modulators region spans residues 1–69; it reads MTTWNKCLKK…TIQEFHDGDL (69 aa). The tract at residues 69–154 is domain II; sequence LLIEYSNKKF…KDDQEYSFGL (86 aa). Residues 106–126 form a disordered region; it reads DSEETSLNQEPKKSQKKLSSK. The tract at residues 155-371 is domain III, AAA+ region; sequence PLKEKYVFDS…GALNRVLTTS (217 aa). ATP contacts are provided by glycine 199, glycine 201, lysine 202, and threonine 203. Residues 372–491 form a domain IV, binds dsDNA region; sequence KFNHKDPTIE…YELLLDKISR (120 aa).

The protein belongs to the DnaA family. As to quaternary structure, oligomerizes as a right-handed, spiral filament on DNA at oriC.

It localises to the cytoplasm. In terms of biological role, plays an essential role in the initiation and regulation of chromosomal replication. ATP-DnaA binds to the origin of replication (oriC) to initiate formation of the DNA replication initiation complex once per cell cycle. Binds the DnaA box (a 9 base pair repeat at the origin) and separates the double-stranded (ds)DNA. Forms a right-handed helical filament on oriC DNA; dsDNA binds to the exterior of the filament while single-stranded (ss)DNA is stabiized in the filament's interior. The ATP-DnaA-oriC complex binds and stabilizes one strand of the AT-rich DNA unwinding element (DUE), permitting loading of DNA polymerase. After initiation quickly degrades to an ADP-DnaA complex that is not apt for DNA replication. Binds acidic phospholipids. The protein is Chromosomal replication initiator protein DnaA of Francisella philomiragia subsp. philomiragia (strain ATCC 25017 / CCUG 19701 / FSC 153 / O#319-036).